We begin with the raw amino-acid sequence, 163 residues long: Peptidyl-prolyl cis-trans isomerase (163 aa).

One can recognise a PPIase cyclophilin-type domain in the interval 17 to 163 (KTAYATIKTN…IESVVFSSSL (147 aa)).

It belongs to the cyclophilin-type PPIase family.

The catalysed reaction is [protein]-peptidylproline (omega=180) = [protein]-peptidylproline (omega=0). Functionally, PPIases accelerate the folding of proteins. It catalyzes the cis-trans isomerization of proline imidic peptide bonds in oligopeptides. The protein is Peptidyl-prolyl cis-trans isomerase (ppiA) of Helicobacter pylori (strain ATCC 700392 / 26695) (Campylobacter pylori).